Reading from the N-terminus, the 243-residue chain is Peptidyl-tRNA hydrolase (243 aa).

TRNA is bound at residue Y14. H19 serves as the catalytic Proton acceptor. Residues F64, N66, and N112 each coordinate tRNA. Residues 184–225 (AAQTRPAEKAKPLATAKPKEGEARTSGGSVAEVGAPPPSPTG) are disordered. The span at 189–206 (PAEKAKPLATAKPKEGEA) shows a compositional bias: basic and acidic residues.

This sequence belongs to the PTH family. In terms of assembly, monomer.

The protein localises to the cytoplasm. The catalysed reaction is an N-acyl-L-alpha-aminoacyl-tRNA + H2O = an N-acyl-L-amino acid + a tRNA + H(+). Its function is as follows. Hydrolyzes ribosome-free peptidyl-tRNAs (with 1 or more amino acids incorporated), which drop off the ribosome during protein synthesis, or as a result of ribosome stalling. Catalyzes the release of premature peptidyl moieties from peptidyl-tRNA molecules trapped in stalled 50S ribosomal subunits, and thus maintains levels of free tRNAs and 50S ribosomes. The protein is Peptidyl-tRNA hydrolase of Rhodospirillum rubrum (strain ATCC 11170 / ATH 1.1.1 / DSM 467 / LMG 4362 / NCIMB 8255 / S1).